The primary structure comprises 494 residues: Histidine--tRNA ligase (494 aa).

The interval M1–R20 is disordered.

It belongs to the class-II aminoacyl-tRNA synthetase family. As to quaternary structure, homodimer.

The protein localises to the cytoplasm. The enzyme catalyses tRNA(His) + L-histidine + ATP = L-histidyl-tRNA(His) + AMP + diphosphate + H(+). This is Histidine--tRNA ligase from Paracoccus denitrificans (strain Pd 1222).